Here is a 145-residue protein sequence, read N- to C-terminus: Putative esterase PA1618 (145 aa).

It belongs to the thioesterase PaaI family.

In Pseudomonas aeruginosa (strain ATCC 15692 / DSM 22644 / CIP 104116 / JCM 14847 / LMG 12228 / 1C / PRS 101 / PAO1), this protein is Putative esterase PA1618.